The chain runs to 307 residues: Serine/threonine-protein phosphatase PP2A-1 catalytic subunit (307 aa).

Mn(2+)-binding residues include aspartate 54, histidine 56, aspartate 82, and asparagine 114. Residue histidine 115 is the Proton donor of the active site. Histidine 164 and histidine 238 together coordinate Mn(2+). Residues 286–307 form a disordered region; the sequence is FEPAPRRGAEGEVNRRTPDYFL. Basic and acidic residues predominate over residues 289–307; the sequence is APRRGAEGEVNRRTPDYFL.

The protein belongs to the PPP phosphatase family. PP-2A subfamily. Mn(2+) serves as cofactor.

It catalyses the reaction O-phospho-L-seryl-[protein] + H2O = L-seryl-[protein] + phosphate. The enzyme catalyses O-phospho-L-threonyl-[protein] + H2O = L-threonyl-[protein] + phosphate. This chain is Serine/threonine-protein phosphatase PP2A-1 catalytic subunit, found in Acetabularia peniculus (Green alga).